The following is a 35-amino-acid chain: MEALVYTFLLVSTLGIIFFAIFFREPPKIQTKKIK.

A helical transmembrane segment spans residues 3-23 (ALVYTFLLVSTLGIIFFAIFF).

The protein belongs to the PsbT family. PSII is composed of 1 copy each of membrane proteins PsbA, PsbB, PsbC, PsbD, PsbE, PsbF, PsbH, PsbI, PsbJ, PsbK, PsbL, PsbM, PsbT, PsbY, PsbZ, Psb30/Ycf12, at least 3 peripheral proteins of the oxygen-evolving complex and a large number of cofactors. It forms dimeric complexes.

The protein resides in the plastid. It is found in the chloroplast thylakoid membrane. Functionally, found at the monomer-monomer interface of the photosystem II (PS II) dimer, plays a role in assembly and dimerization of PSII. PSII is a light-driven water plastoquinone oxidoreductase, using light energy to abstract electrons from H(2)O, generating a proton gradient subsequently used for ATP formation. This chain is Photosystem II reaction center protein T, found in Bassia hyssopifolia (Fivehorn smotherweed).